Reading from the N-terminus, the 172-residue chain is SsrA-binding protein (172 aa).

It belongs to the SmpB family.

The protein localises to the cytoplasm. Required for rescue of stalled ribosomes mediated by trans-translation. Binds to transfer-messenger RNA (tmRNA), required for stable association of tmRNA with ribosomes. tmRNA and SmpB together mimic tRNA shape, replacing the anticodon stem-loop with SmpB. tmRNA is encoded by the ssrA gene; the 2 termini fold to resemble tRNA(Ala) and it encodes a 'tag peptide', a short internal open reading frame. During trans-translation Ala-aminoacylated tmRNA acts like a tRNA, entering the A-site of stalled ribosomes, displacing the stalled mRNA. The ribosome then switches to translate the ORF on the tmRNA; the nascent peptide is terminated with the 'tag peptide' encoded by the tmRNA and targeted for degradation. The ribosome is freed to recommence translation, which seems to be the essential function of trans-translation. The protein is SsrA-binding protein of Dehalococcoides mccartyi (strain ATCC BAA-2266 / KCTC 15142 / 195) (Dehalococcoides ethenogenes (strain 195)).